A 141-amino-acid chain; its full sequence is Nucleoside diphosphate kinase (141 aa).

ATP is bound by residues Lys-11, Phe-59, Arg-87, Thr-93, Arg-104, and Asn-114. Residue His-117 is the Pros-phosphohistidine intermediate of the active site.

It belongs to the NDK family. As to quaternary structure, homotetramer. Mg(2+) is required as a cofactor.

Its subcellular location is the cytoplasm. The catalysed reaction is a 2'-deoxyribonucleoside 5'-diphosphate + ATP = a 2'-deoxyribonucleoside 5'-triphosphate + ADP. It carries out the reaction a ribonucleoside 5'-diphosphate + ATP = a ribonucleoside 5'-triphosphate + ADP. Functionally, major role in the synthesis of nucleoside triphosphates other than ATP. The ATP gamma phosphate is transferred to the NDP beta phosphate via a ping-pong mechanism, using a phosphorylated active-site intermediate. This Cupriavidus metallidurans (strain ATCC 43123 / DSM 2839 / NBRC 102507 / CH34) (Ralstonia metallidurans) protein is Nucleoside diphosphate kinase.